Consider the following 444-residue polypeptide: Phosphoglucosamine mutase (444 aa).

The active-site Phosphoserine intermediate is S104. Positions 104, 243, 245, and 247 each coordinate Mg(2+). S104 bears the Phosphoserine mark.

This sequence belongs to the phosphohexose mutase family. It depends on Mg(2+) as a cofactor. In terms of processing, activated by phosphorylation.

It carries out the reaction alpha-D-glucosamine 1-phosphate = D-glucosamine 6-phosphate. Its function is as follows. Catalyzes the conversion of glucosamine-6-phosphate to glucosamine-1-phosphate. The protein is Phosphoglucosamine mutase of Neisseria meningitidis serogroup C / serotype 2a (strain ATCC 700532 / DSM 15464 / FAM18).